The chain runs to 640 residues: Choline O-acetyltransferase (640 aa).

Residues 1-22 are compositionally biased toward basic and acidic residues; that stretch reads MPDLEKDMQKKEKDSRSKDEPA. The tract at residues 1 to 28 is disordered; the sequence is MPDLEKDMQKKEKDSRSKDEPAVPKLPV. The active-site Proton acceptor is the histidine 334. CoA is bound by residues 412 to 424, serine 450, and glutamine 551; that span reads GKEF…TSPD.

The protein belongs to the carnitine/choline acetyltransferase family. As to expression, detected in brain and in embryonic retina.

It catalyses the reaction choline + acetyl-CoA = acetylcholine + CoA. Its function is as follows. Catalyzes the reversible synthesis of acetylcholine (ACh) from acetyl CoA and choline at cholinergic synapses. The chain is Choline O-acetyltransferase (CHAT) from Gallus gallus (Chicken).